A 133-amino-acid polypeptide reads, in one-letter code: Endoribonuclease YbeY (133 aa).

Zn(2+) is bound by residues His-105, His-109, and His-115.

This sequence belongs to the endoribonuclease YbeY family. Zn(2+) serves as cofactor.

Its subcellular location is the cytoplasm. Its function is as follows. Single strand-specific metallo-endoribonuclease involved in late-stage 70S ribosome quality control and in maturation of the 3' terminus of the 16S rRNA. The sequence is that of Endoribonuclease YbeY from Lawsonia intracellularis (strain PHE/MN1-00).